The sequence spans 110 residues: UPF0122 protein BCA_3946 (110 aa).

The protein belongs to the UPF0122 family.

Its function is as follows. Might take part in the signal recognition particle (SRP) pathway. This is inferred from the conservation of its genetic proximity to ftsY/ffh. May be a regulatory protein. The chain is UPF0122 protein BCA_3946 from Bacillus cereus (strain 03BB102).